The following is a 273-amino-acid chain: MAIRFFKPTTPGRRHGSVLNFDDLSSKKPEKKLTRGWSRAQGRNNKGRITTRHRGGGHKRLYREIDFIRNKIGTSAIVKSIEYDPNRTARIALVCYKDGEKRYILSPTGLKVGEMVIASPNAPITVGNTLPLYNIPLGTSVHNVELQPGAGGQLVRSAGSVAQIVAKEGQWATLHLPSGEYRLIPQKCWATVGRVGNLDNSNITLGKAGRSRWLSQRPHVRGSAMNPVDHPHGGGEGKAPIGRARPVSLWGKPALGVKTRKRKKFSNNLIINL.

Disordered stretches follow at residues 30–55 and 222–243; these read EKKLTRGWSRAQGRNNKGRITTRHRG and GSAMNPVDHPHGGGEGKAPIGR. Basic residues predominate over residues 45–55; the sequence is NKGRITTRHRG.

It belongs to the universal ribosomal protein uL2 family. Part of the 50S ribosomal subunit.

It localises to the plastid. In Prototheca wickerhamii, this protein is Large ribosomal subunit protein uL2c (rpl2).